Reading from the N-terminus, the 199-residue chain is Superoxide dismutase [Mn/Fe] 1 (199 aa).

4 residues coordinate Fe(3+): His-27, His-81, Asp-161, and His-165. Residues His-27, His-81, Asp-161, and His-165 each contribute to the Mn(2+) site.

This sequence belongs to the iron/manganese superoxide dismutase family. Homodimer. Can also form a heterodimer with SodM. Mn(2+) serves as cofactor. The cofactor is Fe(3+).

The enzyme catalyses 2 superoxide + 2 H(+) = H2O2 + O2. Functionally, destroys superoxide anion radicals which are normally produced within the cells and which are toxic to biological systems. Catalyzes the dismutation of superoxide anion radicals into O2 and H2O2 by successive reduction and oxidation of the transition metal ion at the active site. This chain is Superoxide dismutase [Mn/Fe] 1 (sodA), found in Staphylococcus aureus (strain USA300).